The following is a 155-amino-acid chain: Small ribosomal subunit protein uS7 (155 aa).

The protein belongs to the universal ribosomal protein uS7 family. As to quaternary structure, part of the 30S ribosomal subunit. Contacts proteins S9 and S11.

One of the primary rRNA binding proteins, it binds directly to 16S rRNA where it nucleates assembly of the head domain of the 30S subunit. Is located at the subunit interface close to the decoding center, probably blocks exit of the E-site tRNA. The protein is Small ribosomal subunit protein uS7 of Mycoplasmoides gallisepticum (strain R(low / passage 15 / clone 2)) (Mycoplasma gallisepticum).